The sequence spans 963 residues: MHC class II regulatory factor RFX1 (963 aa).

4 disordered regions span residues 1–88, 105–126, 174–218, and 361–392; these read MATQ…APSP, ASETVSEASPSSTASQTGVPTQ, QSPA…GTPA, and SSSEAGASNSSVGAGGNGGGGSSGGGSGGSSG. The span at 20-41 shows a compositional bias: pro residues; the sequence is PQAPPQALPQPPPPAAPQPPAA. Positions 42–67 are enriched in low complexity; it reads ATPQPQYVTELQSPQPQTQPPGSQKQ. A Phosphoserine modification is found at Ser-54. A compositionally biased stretch (pro residues) spans 75–87; that stretch reads APAPSQPATPAPS. 3 stretches are compositionally biased toward polar residues: residues 107–119, 181–196, and 204–214; these read ETVSEASPSSTAS, KSGQVSLTVHSAQQVH, and VQANNSTSKTA. Residues 361–372 show a composition bias toward low complexity; the sequence is SSSEAGASNSSV. Gly residues predominate over residues 373–392; it reads GAGGNGGGGSSGGGSGGSSG. Residues 423–498 constitute a DNA-binding region (RFX-type winged-helix); sequence TVQWLLDNYE…YHYYGLRIKA (76 aa). A disordered region spans residues 899 to 948; the sequence is SLNPLDPDKDEEEEEEEESEDELPQDISLAAGSESPALGPEALEPPAKLA. The span at 906-922 shows a compositional bias: acidic residues; it reads DKDEEEEEEEESEDELP. Residues 932–947 show a composition bias toward low complexity; sequence ESPALGPEALEPPAKL. Ser-962 and Ser-963 each carry phosphoserine.

This sequence belongs to the RFX family. As to quaternary structure, homodimer; binds DNA as a homodimer. Heterodimer; heterodimerizes with RFX2 and RFX3.

It localises to the nucleus. Its function is as follows. Regulatory factor essential for MHC class II genes expression. Binds to the X boxes of MHC class II genes. The chain is MHC class II regulatory factor RFX1 (Rfx1) from Mus musculus (Mouse).